Consider the following 378-residue polypeptide: Lysocardiolipin acyltransferase 1 (378 aa).

A run of 2 helical transmembrane segments spans residues 9 to 29 and 46 to 66; these read FVVA…GPFL and IVAT…GAKV. Residues 85–90 carry the HXXXXD motif motif; it reads HRTRMD. Helical transmembrane passes span 302 to 322 and 336 to 358; these read LRVL…PMGT and FAAM…LIEL.

This sequence belongs to the 1-acyl-sn-glycerol-3-phosphate acyltransferase family.

Its subcellular location is the endoplasmic reticulum membrane. It carries out the reaction a 1-acyl-sn-glycero-3-phosphate + an acyl-CoA = a 1,2-diacyl-sn-glycero-3-phosphate + CoA. The catalysed reaction is a 1-acyl-sn-glycero-3-phospho-(1D-myo-inositol) + an acyl-CoA = a 1,2-diacyl-sn-glycero-3-phospho-(1D-myo-inositol) + CoA. The enzyme catalyses 1-acyl-sn-glycero-3-phospho-(1'-sn-glycerol) + an acyl-CoA = a 1,2-diacyl-sn-glycero-3-phospho-(1'-sn-glycerol) + CoA. It catalyses the reaction 1-hexadecanoyl-sn-glycero-3-phosphate + (9Z)-octadecenoyl-CoA = 1-hexadecanoyl-2-(9Z-octadecenoyl)-sn-glycero-3-phosphate + CoA. It carries out the reaction 1-(9Z-octadecenoyl)-sn-glycero-3-phosphate + (9Z)-octadecenoyl-CoA = 1,2-di-(9Z-octadecenoyl)-sn-glycero-3-phosphate + CoA. The catalysed reaction is 1-(9Z,12Z)-octadecadienoyl-sn-glycero-3-phosphate + (9Z)-octadecenoyl-CoA = 1-(9Z,12Z)-octadecadienoyl-2-(9Z)-octadecenoyl-sn-glycero-3-phosphate + CoA. The enzyme catalyses 1-(9Z,12Z,15Z)-octadecatrienoyl-sn-glycero-3-phosphate + (9Z)-octadecenoyl-CoA = 1-(9Z,12Z,15Z)-octadecatrienoyl-2-(9Z)-octadecenoyl-sn-glycero-3-phosphate + CoA. It catalyses the reaction 1-(9Z-octadecenoyl)-sn-glycero-3-phosphate + hexadecanoyl-CoA = 1-(9Z)-octadecenoyl-2-hexadecanoyl-sn-glycero-3-phosphate + CoA. It carries out the reaction 1-(9Z-octadecenoyl)-sn-glycero-3-phosphate + octadecanoyl-CoA = 1-(9Z-octadecenoyl)-2-octadecanoyl-sn-glycero-3-phosphate + CoA. The catalysed reaction is 1-acyl-sn-glycero-3-phospho-(1'-sn-glycerol) + (9Z)-octadecenoyl-CoA = 1-acyl-2-(9Z-octadecenoyl)-sn-glycero-3-phospho-(1'-sn-glycerol) + CoA. The enzyme catalyses a 1-acyl-sn-glycero-3-phospho-(1D-myo-inositol) + (9Z)-octadecenoyl-CoA = a 1-acyl-2-(9Z-octadecenoyl)-sn-glycero-3-phospho-(1D-myo-inositol) + CoA. It catalyses the reaction 1-hexadecanoyl-sn-glycero-3-phospho-(1D-myo-inositol) + hexadecanoyl-CoA = 1,2-dihexadecanoyl-sn-glycero-3-phospho-(1D-myo-inositol) + CoA. It carries out the reaction 1-hexadecanoyl-sn-glycero-3-phospho-(1D-myo-inositol) + octadecanoyl-CoA = 1-hexadecanoyl-2-octadecanoyl-sn-glycero-3-phospho-(1D-myo-inositol) + CoA. The catalysed reaction is 1-hexadecanoyl-sn-glycero-3-phospho-(1D-myo-inositol) + (9Z)-octadecenoyl-CoA = 1-hexadecanoyl-2-(9Z-octadecenoyl)-sn-glycero-3-phospho-(1D-myo-inositol) + CoA. The enzyme catalyses 1-hexadecanoyl-sn-glycero-3-phospho-(1D-myo-inositol) + (9Z,12Z)-octadecadienoyl-CoA = 1-hexadecanoyl-2-(9Z,12Z-octadecadienoyl)-sn-glycero-3-phospho-(1D-myo-inositol) + CoA. It catalyses the reaction 1-hexadecanoyl-sn-glycero-3-phospho-(1D-myo-inositol) + (5Z,8Z,11Z,14Z)-eicosatetraenoyl-CoA = 1-hexadecanoyl-2-(5Z,8Z,11Z,14Z-eicosatetraenoyl)-sn-glycero-3-phospho-D-myo-inositol + CoA. It carries out the reaction 1-hexadecanoyl-sn-glycero-3-phospho-(1'-sn-glycerol) + hexadecanoyl-CoA = 1,2-dihexadecanoyl-sn-glycero-3-phospho-(1'-sn-glycerol) + CoA. The catalysed reaction is 1-hexadecanoyl-sn-glycero-3-phospho-(1'-sn-glycerol) + octadecanoyl-CoA = 1-hexadecanoyl-2-octadecanoyl-sn-glycero-3-phospho-(1'-sn-glycerol) + CoA. The enzyme catalyses 1-hexadecanoyl-sn-glycero-3-phospho-(1'-sn-glycerol) + (9Z)-octadecenoyl-CoA = 1-hexadecanoyl-2-(9Z-octadecenoyl)-sn-glycero-3-phospho-(1'-sn-glycerol) + CoA. It catalyses the reaction 1-hexadecanoyl-sn-glycero-3-phospho-(1'-sn-glycerol) + (9Z,12Z)-octadecadienoyl-CoA = 1-hexadecanoyl-2-(9Z,12Z-octadecadienoyl)-sn-glycero-3-phospho-(1'-sn-glycerol) + CoA. It carries out the reaction 1-tetradecanoyl-sn-glycero-3-phospho-(1'-sn-glycerol) + (9Z)-octadecenoyl-CoA = 1-tetradecanoyl-2-(9Z-octadecenoyl)-sn-glycero-3-phospho-(1'-sn-glycerol) + CoA. The catalysed reaction is 1-octadecanoyl-sn-glycero-3-phospho-(1'-sn-glycerol) + (9Z)-octadecenoyl-CoA = 1-octadecanoyl-2-(9Z-octadecenoyl)-sn-glycero-3-phospho-(1'-sn-glycerol) + CoA. The enzyme catalyses 1-(9Z-octadecenoyl)-sn-glycero-3-phospho-(1'-sn-glycerol) + (9Z)-octadecenoyl-CoA = 1,2-di-(9Z-octadecenoyl)-sn-glycero-3-phospho-(1'-sn-glycerol) + CoA. It catalyses the reaction 1-hexadecanoyl-sn-glycero-3-phospho-(1D-myo-inositol) + dodecanoyl-CoA = 1-hexadecanoyl-2-dodecanoyl-sn-glycero-3-phospho-(1D-myo-inositol) + CoA. It carries out the reaction 1',3'-bis-[1-acyl-sn-glycero-3-phospho]-glycerol + (9Z)-octadecenoyl-CoA = 1'-[1-acyl-2-(9Z)-octadecenoyl-sn-glycero-3-phospho],3'-[1-acyl,2-hydroxy-sn-glycero-3-phospho]-glycerol + CoA. The catalysed reaction is 1'-[1,2-diacyl-sn-glycero-3-phospho],3'-[1-acyl-sn-glycero-3-phospho]-glycerol + (9Z)-octadecenoyl-CoA = 1'-[1,2-diacyl-sn-glycero-3-phospho],3'-[1-acyl,2-(9Z)-octadecenoyl-sn-glycero-3-phospho]-glycerol + CoA. The enzyme catalyses 1'-[1,2-diacyl-sn-glycero-3-phospho],3'-[1-acyl-sn-glycero-3-phospho]-glycerol + (9Z,12Z)-octadecadienoyl-CoA = 1'-[1,2-diacyl-sn-glycero-3-phospho],3'-[1-acyl,2-(9Z,12Z)-octadecadienoyl-sn-glycero-3-phospho]-glycerol + CoA. It catalyses the reaction 1'-[1,2-diacyl-sn-glycero-3-phospho],3'-[1-acyl-sn-glycero-3-phospho]-glycerol + dodecanoyl-CoA = 1'-[1,2-diacyl-sn-glycero-3-phospho],3'-[1-acyl,2-dodecanoyl-sn-glycero-3-phospho]-glycerol + CoA. It carries out the reaction 1',3'-bis-[1-acyl-sn-glycero-3-phospho]-glycerol + dodecanoyl-CoA = 1'-[1-acyl-2-dodecanoyl-sn-glycero-3-phospho],3'-[1-acyl,2-hydroxy-sn-glycero-3-phospho]-glycerol + CoA. The catalysed reaction is a 1-acyl-sn-glycero-3-phosphate + (9Z)-octadecenoyl-CoA = a 1-acyl-2-(9Z-octadecenoyl)-sn-glycero-3-phosphate + CoA. The enzyme catalyses 1',3'-bis-[1-acyl-sn-glycero-3-phospho]-glycerol + (9Z,12Z)-octadecadienoyl-CoA = 1'-[1-acyl-2-(9Z,12Z)-octadecadienoyl-sn-glycero-3-phospho],3'-[1-acyl,2-hydroxy-sn-glycero-3-phospho]-glycerol + CoA. It catalyses the reaction 1',3'-bis-[1-acyl-sn-glycero-3-phospho]-glycerol + hexadecanoyl-CoA = 1'-[1-acyl-2-hexadecanoyl-sn-glycero-3-phospho],3'-[1-acyl,2-hydroxy-sn-glycero-3-phospho]-glycerol + CoA. It carries out the reaction 1',3'-bis-[1-acyl-sn-glycero-3-phospho]-glycerol + octadecanoyl-CoA = 1'-[1-acyl-2-octadecanoyl-sn-glycero-3-phospho],3'-[1-acyl,2-hydroxy-sn-glycero-3-phospho]-glycerol + CoA. The catalysed reaction is 1'-[1,2-diacyl-sn-glycero-3-phospho],3'-[1-acyl-sn-glycero-3-phospho]-glycerol + octanoyl-CoA = 1'-[1,2-diacyl-sn-glycero-3-phospho],3'-[1-acyl,2-octanoyl-sn-glycero-3-phospho]-glycerol + CoA. The enzyme catalyses 1',3'-bis-[1-acyl-sn-glycero-3-phospho]-glycerol + octanoyl-CoA = 1'-[1-acyl-2-octanoyl-sn-glycero-3-phospho],3'-[1-acyl,2-hydroxy-sn-glycero-3-phospho]-glycerol + CoA. It catalyses the reaction 1'-[1,2-diacyl-sn-glycero-3-phospho],3'-[1-acyl-sn-glycero-3-phospho]-glycerol + hexadecanoyl-CoA = 1'-[1,2-diacyl-sn-glycero-3-phospho],3'-[1-acyl,2-hexadecanoyl-sn-glycero-3-phospho]-glycerol + CoA. It carries out the reaction 1'-[1,2-diacyl-sn-glycero-3-phospho],3'-[1-acyl-sn-glycero-3-phospho]-glycerol + (5Z,8Z,11Z,14Z)-eicosatetraenoyl-CoA = 1'-[1,2-diacyl-sn-glycero-3-phospho],3'-[1-acyl,2-(5Z,8Z,11Z,14Z)-eicosatetraenoyl-sn-glycero-3-phospho]-glycerol + CoA. The catalysed reaction is 1',3'-bis-[1-acyl-sn-glycero-3-phospho]-glycerol + (5Z,8Z,11Z,14Z)-eicosatetraenoyl-CoA = 1'-[1-acyl-2-(5Z,8Z,11Z,14Z)-eicosatetraenoyl-sn-glycero-3-phospho],3'-[1-acyl,2-hydroxy-sn-glycero-3-phospho]-glycerol + CoA. The enzyme catalyses a 1-acyl-sn-glycero-3-phospho-(1D-myo-inositol) + octadecanoyl-CoA = a 1-acyl-2-octadecanoyl-sn-glycero-3-phospho-(1D-myo-inositol) + CoA. It catalyses the reaction a 2-acyl-sn-glycero-3-phospho-D-myo-inositol + octadecanoyl-CoA = 1-octadecanoyl-2-acyl-sn-glycero-3-phospho-1D-myo-inositol + CoA. It participates in phospholipid metabolism; CDP-diacylglycerol biosynthesis; CDP-diacylglycerol from sn-glycerol 3-phosphate: step 2/3. Exhibits acyl-CoA:lysocardiolipin acyltransferase (ALCAT) activity; catalyzes the reacylation of lyso-cardiolipin to cardiolipin (CL), a key step in CL remodeling. Recognizes both monolysocardiolipin and dilysocardiolipin as substrates with a preference for linoleoyl-CoA and oleoyl-CoA as acyl donors. Also exhibits 1-acyl-sn-glycerol-3-phosphate acyltransferase activity (AGPAT) activity; converts 1-acyl-sn-glycerol-3- phosphate (lysophosphatidic acid or LPA) into 1,2-diacyl-sn-glycerol-3- phosphate (phosphatidic acid or PA) by incorporating an acyl moiety at the sn-2 position of the glycerol backbone. Possesses both lysophosphatidylinositol acyltransferase (LPIAT) and lysophosphatidylglycerol acyltransferase (LPGAT) activities. Required for establishment of the hematopoietic and endothelial lineages. The protein is Lysocardiolipin acyltransferase 1 (LCLAT1) of Gallus gallus (Chicken).